We begin with the raw amino-acid sequence, 314 residues long: Probable manganese-dependent inorganic pyrophosphatase (314 aa).

6 residues coordinate Mn(2+): histidine 10, aspartate 14, aspartate 16, aspartate 80, histidine 102, and aspartate 154.

Belongs to the PPase class C family. Mn(2+) serves as cofactor.

It is found in the cytoplasm. The catalysed reaction is diphosphate + H2O = 2 phosphate + H(+). In Lactococcus lactis subsp. lactis (strain IL1403) (Streptococcus lactis), this protein is Probable manganese-dependent inorganic pyrophosphatase (ppaC).